We begin with the raw amino-acid sequence, 103 residues long: Large ribosomal subunit protein uL24 (103 aa).

It belongs to the universal ribosomal protein uL24 family. In terms of assembly, part of the 50S ribosomal subunit.

Its function is as follows. One of two assembly initiator proteins, it binds directly to the 5'-end of the 23S rRNA, where it nucleates assembly of the 50S subunit. In terms of biological role, one of the proteins that surrounds the polypeptide exit tunnel on the outside of the subunit. The sequence is that of Large ribosomal subunit protein uL24 from Lachnospira eligens (strain ATCC 27750 / DSM 3376 / VPI C15-48 / C15-B4) (Eubacterium eligens).